The primary structure comprises 452 residues: Biotin carboxylase (452 aa).

The region spanning 1 to 445 (MFKKVLIANR…TTAFVTNHLK (445 aa)) is the Biotin carboxylation domain. ATP contacts are provided by residues K116, K158, 164-165 (GG), 200-203 (EKAV), H208, and H235. Positions 120–317 (RTAMQTAGVP…LVEWQLLIAA (198 aa)) constitute an ATP-grasp domain. K237 contributes to the hydrogencarbonate binding site. 2 residues coordinate ATP: E275 and E288. Mg(2+) is bound by residues E275, E288, and N290. Mn(2+)-binding residues include E275, E288, and N290. Hydrogencarbonate is bound by residues R292, V295, and R338. Residue R292 is part of the active site. Residue R338 coordinates biotin.

As to quaternary structure, acetyl-CoA carboxylase is a heterohexamer of biotin carboxyl carrier protein, biotin carboxylase and the two subunits of carboxyl transferase in a 2:2 complex. Requires Mg(2+) as cofactor. Mn(2+) is required as a cofactor.

The catalysed reaction is N(6)-biotinyl-L-lysyl-[protein] + hydrogencarbonate + ATP = N(6)-carboxybiotinyl-L-lysyl-[protein] + ADP + phosphate + H(+). It functions in the pathway lipid metabolism; malonyl-CoA biosynthesis; malonyl-CoA from acetyl-CoA: step 1/1. Functionally, this protein is a component of the acetyl coenzyme A carboxylase complex; first, biotin carboxylase catalyzes the carboxylation of the carrier protein and then the transcarboxylase transfers the carboxyl group to form malonyl-CoA. The polypeptide is Biotin carboxylase (accC) (Halalkalibacterium halodurans (strain ATCC BAA-125 / DSM 18197 / FERM 7344 / JCM 9153 / C-125) (Bacillus halodurans)).